Reading from the N-terminus, the 214-residue chain is Nodulation protein A (214 aa).

Belongs to the NodA family.

It localises to the cytoplasm. In terms of biological role, N-acyltransferase required for nodulation. Acts in the production of a small, heat-stable compound (Nod) that stimulates mitosis in various plant protoplasts. The sequence is that of Nodulation protein A from Methylobacterium nodulans (strain LMG 21967 / CNCM I-2342 / ORS 2060).